The following is a 362-amino-acid chain: Ribosome-binding ATPase YchF (362 aa).

The region spanning 3-255 (FKCGIIGLPN…MSDEEKKSFM (253 aa)) is the OBG-type G domain. 12-17 (NVGKST) is an ATP binding site. Residues serine 16 and threonine 36 each coordinate Mg(2+). The TGS domain maps to 277–360 (NLITFFTVGD…QDGDIIHFLF (84 aa)).

Belongs to the TRAFAC class OBG-HflX-like GTPase superfamily. OBG GTPase family. YchF/OLA1 subfamily. It depends on Mg(2+) as a cofactor.

Its function is as follows. ATPase that binds to both the 70S ribosome and the 50S ribosomal subunit in a nucleotide-independent manner. In Buchnera aphidicola subsp. Acyrthosiphon pisum (strain APS) (Acyrthosiphon pisum symbiotic bacterium), this protein is Ribosome-binding ATPase YchF.